We begin with the raw amino-acid sequence, 277 residues long: MMGLRKMCRGSLMSKIIIGRYIPGDSLVYKMDPRGKLLITILFIWAIFLANNPITYAIITFFCFLAIIATGLKARVFWNGVKPLIGLIFFTSLLQLFFMTGGHVFWHWWIFSISSYGVENAIYIFIRFTLIILISTVMTVTTMPLEIADAMEWLLKPLKIFKVPVDEIALVISIALRFVPTLFDETLKIMNAQRSRGADFNDGGLIKRAKAIAPILVPLFIHSLETAIDLSTAMESRGYRGSAGRTKYRVLNWSKYDLISLAYFILLVGLLLIFRTH.

The next 6 membrane-spanning stretches (helical) occupy residues 39-59 (ITIL…YAII), 61-81 (FFCF…WNGV), 85-105 (IGLI…GHVF), 121-141 (AIYI…MTVT), 163-183 (VPVD…PTLF), and 254-274 (SKYD…LLIF).

This sequence belongs to the energy-coupling factor EcfT family. In terms of assembly, forms a stable energy-coupling factor (ECF) transporter complex composed of 2 membrane-embedded substrate-binding proteins (S component), 2 ATP-binding proteins (A component) and 2 transmembrane proteins (T component). May be able to interact with more than 1 S component at a time.

It localises to the cell membrane. Its function is as follows. Transmembrane (T) component of an energy-coupling factor (ECF) ABC-transporter complex. Unlike classic ABC transporters this ECF transporter provides the energy necessary to transport a number of different substrates. The protein is Energy-coupling factor transporter transmembrane protein EcfT of Lactobacillus helveticus (strain DPC 4571).